Consider the following 105-residue polypeptide: Cell division protein FtsB (105 aa).

The Cytoplasmic portion of the chain corresponds to 1–3; sequence MRI. The chain crosses the membrane as a helical span at residues 4-21; sequence VIYSMLVLLIAIQYPLWL. Topologically, residues 22 to 105 are periplasmic; the sequence is GKGGWLKVYE…DTAKASTVKQ (84 aa). The stretch at 32-60 forms a coiled coil; that stretch reads MEKQVELQEAKNSLLALRNAKLEGDVKDL.

The protein belongs to the FtsB family. As to quaternary structure, part of a complex composed of FtsB, FtsL and FtsQ.

It localises to the cell inner membrane. Functionally, essential cell division protein. May link together the upstream cell division proteins, which are predominantly cytoplasmic, with the downstream cell division proteins, which are predominantly periplasmic. In Polynucleobacter asymbioticus (strain DSM 18221 / CIP 109841 / QLW-P1DMWA-1) (Polynucleobacter necessarius subsp. asymbioticus), this protein is Cell division protein FtsB.